Consider the following 465-residue polypeptide: Fumarate hydratase class II (465 aa).

Residues 99-101, Arg-127, 130-133, 140-142, and Thr-188 each bind substrate; these read SGT, HPND, and STN. Catalysis depends on His-189, which acts as the Proton donor/acceptor. Residue Ser-319 is part of the active site. Substrate contacts are provided by residues Ser-320 and 325–327; that span reads KVN.

This sequence belongs to the class-II fumarase/aspartase family. Fumarase subfamily. As to quaternary structure, homotetramer.

The protein resides in the cytoplasm. It carries out the reaction (S)-malate = fumarate + H2O. It participates in carbohydrate metabolism; tricarboxylic acid cycle; (S)-malate from fumarate: step 1/1. Functionally, involved in the TCA cycle. Catalyzes the stereospecific interconversion of fumarate to L-malate. The polypeptide is Fumarate hydratase class II (Parasynechococcus marenigrum (strain WH8102)).